The primary structure comprises 397 residues: MSKTIAINAGSSSLKWQLYEMPEEKVVAKGIIERIGLKDSISTVKFDDKKDEQILDIVDHTQAVKILLEDLTKHGIIKDFNEITGVGHRVVAGGEYFKESALVDDKVVEQVEELSALAPLHNPAAAAGIRAFREILPDITSVCVFDTAFHTTMQPHTYLYPIPQKYYTDYKVRKYGAHGTSHQYVAQEAAKQLGRPLEELKLITAHVGNGVSITANYHGQSIDTSMGFTPLAGPMMGTRSGDIDPAIIPYLVANDSELEDAAAVVNMLNKQSGLLGVSGTSSDMRDIEAGLQSKDPNAVLAYNVFIDRIKKFIGQYLAVLNGADAIIFTAGMGENAPLMRQDVIAGLSWFGIELDPEKNVFGYFGDITKPDSKVKVLVIPTDEELMIARDVERLKAK.

Asparagine 8 contacts Mg(2+). Lysine 15 is an ATP binding site. A substrate-binding site is contributed by arginine 89. The Proton donor/acceptor role is filled by aspartate 146. Residues 206 to 210 (HVGNG), 283 to 285 (DMR), and 331 to 335 (GMGEN) contribute to the ATP site. Glutamate 383 provides a ligand contact to Mg(2+).

This sequence belongs to the acetokinase family. As to quaternary structure, homodimer. Mg(2+) is required as a cofactor. Requires Mn(2+) as cofactor.

The protein localises to the cytoplasm. It catalyses the reaction acetate + ATP = acetyl phosphate + ADP. The protein operates within metabolic intermediate biosynthesis; acetyl-CoA biosynthesis; acetyl-CoA from acetate: step 1/2. In terms of biological role, catalyzes the formation of acetyl phosphate from acetate and ATP. Can also catalyze the reverse reaction. The sequence is that of Acetate kinase from Streptococcus agalactiae serotype III (strain NEM316).